The chain runs to 310 residues: HPr kinase/phosphorylase (310 aa).

Active-site residues include His-138 and Lys-159. 153-160 is an ATP binding site; sequence GKSGVGKS. Position 160 (Ser-160) interacts with Mg(2+). The active-site Proton acceptor; for phosphorylation activity. Proton donor; for dephosphorylation activity is Asp-177. The important for the catalytic mechanism of both phosphorylation and dephosphorylation stretch occupies residues 201-210; it reads LEIRGLGIIN. Glu-202 is a Mg(2+) binding site. Arg-243 is an active-site residue. The important for the catalytic mechanism of dephosphorylation stretch occupies residues 264-269; sequence PVRPGR.

It belongs to the HPrK/P family. As to quaternary structure, homohexamer. The cofactor is Mg(2+).

It carries out the reaction [HPr protein]-L-serine + ATP = [HPr protein]-O-phospho-L-serine + ADP + H(+). The enzyme catalyses [HPr protein]-O-phospho-L-serine + phosphate + H(+) = [HPr protein]-L-serine + diphosphate. Catalyzes the ATP- as well as the pyrophosphate-dependent phosphorylation of a specific serine residue in HPr, a phosphocarrier protein of the phosphoenolpyruvate-dependent sugar phosphotransferase system (PTS). HprK/P also catalyzes the pyrophosphate-producing, inorganic phosphate-dependent dephosphorylation (phosphorolysis) of seryl-phosphorylated HPr (P-Ser-HPr). The two antagonistic activities of HprK/P are regulated by several intracellular metabolites, which change their concentration in response to the absence or presence of rapidly metabolisable carbon sources (glucose, fructose, etc.) in the growth medium. Also phosphorylates/dephosphorylates the HPr-like catabolite repression protein crh on a specific serine residue. Therefore, by controlling the phosphorylation state of HPr and crh, HPrK/P is a sensor enzyme that plays a major role in the regulation of carbon metabolism and sugar transport: it mediates carbon catabolite repression (CCR), and regulates PTS-catalyzed carbohydrate uptake and inducer exclusion. The chain is HPr kinase/phosphorylase from Bacillus licheniformis (strain ATCC 14580 / DSM 13 / JCM 2505 / CCUG 7422 / NBRC 12200 / NCIMB 9375 / NCTC 10341 / NRRL NRS-1264 / Gibson 46).